Consider the following 555-residue polypeptide: Glypican-6 (555 aa).

Positions 1 to 23 are cleaved as a signal peptide; it reads MPSWIGAVILPLLGLLLSLPAGA. A compositionally biased stretch (low complexity) spans 348–357; it reads PALRSARSAP. The disordered stretch occupies residues 348–376; it reads PALRSARSAPENFNTRFRPYNPEERPTTA. Residue Ser529 is the site of GPI-anchor amidated serine attachment. A propeptide spans 530 to 555 (removed in mature form); it reads SAAQRGHSLLSWSLTCIVLALQRLCR.

The protein belongs to the glypican family.

It is found in the cell membrane. Its subcellular location is the secreted. The protein resides in the extracellular space. Functionally, cell surface proteoglycan that bears heparan sulfate. Putative cell surface coreceptor for growth factors, extracellular matrix proteins, proteases and anti-proteases. Enhances migration and invasion of cancer cells through WNT5A signaling. This Pongo abelii (Sumatran orangutan) protein is Glypican-6 (GPC6).